The chain runs to 336 residues: N6-methyladenosine RNA methyltransferase MTA1 (336 aa).

The disordered stretch occupies residues 61-83 (LISSEPPHLPFKTPEPKAGSGGL).

Belongs to the MT-A70-like family.

The catalysed reaction is an adenosine in mRNA + S-adenosyl-L-methionine = an N(6)-methyladenosine in mRNA + S-adenosyl-L-homocysteine + H(+). Functionally, N6-methyladenosine RNA methyltransferase that plays a crucial role in fungal phenotypic traits, virulence, and stress tolerance. Mediates the methylation of mRNAs to produce N6-methyladenosine (m6A)-containing mRNAs. M6A is a modification present at internal sites of mRNAs and some non-coding RNAs and plays a role in mRNA stability and processing. Mediates specifically acid phosphatase APHA mRNA stability through a YTHDF1-dependent m6A modification of the A1306, A1341, and A1666 key methylation modification sites. Also mediates the stability of the transcription factor ZAP1 mRNA via modification of residue A1935 localized in the 3'UTR. This chain is N6-methyladenosine RNA methyltransferase MTA1, found in Cryphonectria parasitica (strain ATCC 38755 / EP155).